The primary structure comprises 361 residues: UDP-3-O-acylglucosamine N-acyltransferase (361 aa).

Histidine 253 serves as the catalytic Proton acceptor.

It belongs to the transferase hexapeptide repeat family. LpxD subfamily. Homotrimer.

The catalysed reaction is a UDP-3-O-[(3R)-3-hydroxyacyl]-alpha-D-glucosamine + a (3R)-hydroxyacyl-[ACP] = a UDP-2-N,3-O-bis[(3R)-3-hydroxyacyl]-alpha-D-glucosamine + holo-[ACP] + H(+). It functions in the pathway bacterial outer membrane biogenesis; LPS lipid A biosynthesis. Catalyzes the N-acylation of UDP-3-O-acylglucosamine using 3-hydroxyacyl-ACP as the acyl donor. Is involved in the biosynthesis of lipid A, a phosphorylated glycolipid that anchors the lipopolysaccharide to the outer membrane of the cell. The chain is UDP-3-O-acylglucosamine N-acyltransferase from Burkholderia pseudomallei (strain 668).